A 170-amino-acid polypeptide reads, in one-letter code: Lipoprotein signal peptidase (170 aa).

A run of 3 helical transmembrane segments spans residues 12-32 (WYWI…WVLS), 67-87 (WQRW…SVWL), and 94-113 (MWRL…GNLI). Catalysis depends on residues aspartate 123 and aspartate 141. A helical transmembrane segment spans residues 133–153 (HFPAFNIADSAICIGAGLIIL).

It belongs to the peptidase A8 family.

It is found in the cell inner membrane. The enzyme catalyses Release of signal peptides from bacterial membrane prolipoproteins. Hydrolyzes -Xaa-Yaa-Zaa-|-(S,diacylglyceryl)Cys-, in which Xaa is hydrophobic (preferably Leu), and Yaa (Ala or Ser) and Zaa (Gly or Ala) have small, neutral side chains.. The protein operates within protein modification; lipoprotein biosynthesis (signal peptide cleavage). Its function is as follows. This protein specifically catalyzes the removal of signal peptides from prolipoproteins. This is Lipoprotein signal peptidase from Shewanella piezotolerans (strain WP3 / JCM 13877).